The primary structure comprises 101 residues: MTIKQGDKVQVIAGSYKGEITEVLKVIRKSNSLILKNINIKNKHVKPKKEGEVGQIKQFEAPIHRSNVMLYDEESQIRSRSKFIISQDGKKVRVLKKLVKN.

The protein belongs to the universal ribosomal protein uL24 family. In terms of assembly, part of the 50S ribosomal subunit.

The protein localises to the plastid. It localises to the chloroplast. Functionally, one of two assembly initiator proteins, it binds directly to the 5'-end of the 23S rRNA, where it nucleates assembly of the 50S subunit. The protein is Large ribosomal subunit protein uL24c (rpl24) of Guillardia theta (Cryptophyte).